The primary structure comprises 712 residues: Ferric reductase transmembrane component 6 (712 aa).

Positions 1–17 (MHRTLLFLTWLISLTKA) are cleaved as a signal peptide. At 18 to 167 (FNIKLPHTEK…HAHAYNLDIS (150 aa)) the chain is on the vacuolar side. Asn-89, Asn-112, and Asn-124 each carry an N-linked (GlcNAc...) asparagine glycan. Residues 168–188 (SVYGAYLTYYFVIVGIIAVFF) form a helical membrane-spanning segment. At 189 to 244 (HMSHYNGLNRALFASRFVNYIRGHFVLPTFLVDKHANHFKFLNVEVFTGLMPNSLE) the chain is on the cytoplasmic side. A helical transmembrane segment spans residues 245–265 (AWIIFGYTLANIIFLSISYII). Residues 266–287 (DPYNLIFNSHLSQFTRLLADRS) are Vacuolar-facing. The 125-residue stretch at 287 to 411 (SGILAFTQFP…YCCWQHVKIF (125 aa)) folds into the Ferric oxidoreductase domain. The chain crosses the membrane as a helical span at residues 288 to 308 (GILAFTQFPLIIIFTARNSFL). Topologically, residues 309–328 (EFLTGVKFNSFISFHKWIGR) are cytoplasmic. The heme site is built by His-323 and His-337. A helical transmembrane segment spans residues 329–349 (IMVLNATIHSLSYSLFAIINH). Residues 350-360 (AFKISNKQLYW) are Vacuolar-facing. Residues 361–381 (KFGIASITVLCVLLVLSLGIV) traverse the membrane as a helical segment. The Cytoplasmic segment spans residues 382 to 387 (RKRHYE). Residues 388 to 408 (FFLYTHIILALLFFYCCWQHV) form a helical membrane-spanning segment. Residues His-393 and His-407 each coordinate heme. Topologically, residues 409–416 (KIFNGWKE) are vacuolar. An FAD-binding FR-type domain is found at 412 to 546 (NGWKEWIVVS…EGPYGPSNLH (135 aa)). A helical membrane pass occupies residues 417 to 437 (WIVVSLLIWGLEKLFRIWNIL). Over 438–712 (QFRFPKATLI…IEYFEEYQCW (275 aa)) the chain is Cytoplasmic. Residue 493 to 499 (HPFTIID) participates in FAD binding. Residues 538–541 (GPYG) and 678–679 (CG) contribute to the NADP(+) site.

This sequence belongs to the ferric reductase (FRE) family. It depends on FAD as a cofactor.

It localises to the vacuole membrane. It catalyses the reaction 2 a Fe(II)-siderophore + NADP(+) + H(+) = 2 a Fe(III)-siderophore + NADPH. In terms of biological role, metalloreductase responsible for reducing vacuolar iron and copper prior to transport into the cytosol. Catalyzes the reduction of Fe(3+) to Fe(2+) and Cu(2+) to Cu(+), respectively, which can then be transported by the respective vacuolar efflux systems to the cytosol. This Saccharomyces cerevisiae (strain ATCC 204508 / S288c) (Baker's yeast) protein is Ferric reductase transmembrane component 6 (FRE6).